A 530-amino-acid chain; its full sequence is Hyccin 2 (530 aa).

A phosphothreonine mark is found at T30 and T306. A phosphoserine mark is found at S321 and S341. The disordered stretch occupies residues 328-410 (RREGAEGVNG…DSVVRKQYVQ (83 aa)). The span at 353–373 (SGASLSSQPIGTKPSSSSQRG) shows a compositional bias: polar residues. S430, S442, S444, and S491 each carry phosphoserine. The interval 502-530 (EGKELLSPGAPLTKQSRSPSFNMQLISQV) is disordered. Residues 514–530 (TKQSRSPSFNMQLISQV) show a composition bias toward polar residues.

The protein belongs to the Hyccin family. As to quaternary structure, component of a phosphatidylinositol 4-kinase (PI4K) complex, composed of PI4KA, EFR3 (EFR3A or EFR3B), TTC7 (TTC7A or TTC7B) and HYCC (HYCC1 or HYCC2).

It localises to the cytoplasm. The protein localises to the cytosol. The protein resides in the cell membrane. Functionally, component of a complex required to localize phosphatidylinositol 4-kinase (PI4K) to the plasma membrane. This chain is Hyccin 2, found in Homo sapiens (Human).